The chain runs to 248 residues: UPF0651 protein YPL107W, mitochondrial (248 aa).

The transit peptide at M1–D26 directs the protein to the mitochondrion. The Oxidoreductase-like domain maps to K69–K116.

Belongs to the UPF0651 family.

It localises to the mitochondrion. The protein is UPF0651 protein YPL107W, mitochondrial of Saccharomyces cerevisiae (strain ATCC 204508 / S288c) (Baker's yeast).